The following is a 179-amino-acid chain: ATP synthase subunit delta (179 aa).

This sequence belongs to the ATPase delta chain family. As to quaternary structure, F-type ATPases have 2 components, F(1) - the catalytic core - and F(0) - the membrane proton channel. F(1) has five subunits: alpha(3), beta(3), gamma(1), delta(1), epsilon(1). F(0) has three main subunits: a(1), b(2) and c(10-14). The alpha and beta chains form an alternating ring which encloses part of the gamma chain. F(1) is attached to F(0) by a central stalk formed by the gamma and epsilon chains, while a peripheral stalk is formed by the delta and b chains.

The protein resides in the cell inner membrane. F(1)F(0) ATP synthase produces ATP from ADP in the presence of a proton or sodium gradient. F-type ATPases consist of two structural domains, F(1) containing the extramembraneous catalytic core and F(0) containing the membrane proton channel, linked together by a central stalk and a peripheral stalk. During catalysis, ATP synthesis in the catalytic domain of F(1) is coupled via a rotary mechanism of the central stalk subunits to proton translocation. Functionally, this protein is part of the stalk that links CF(0) to CF(1). It either transmits conformational changes from CF(0) to CF(1) or is implicated in proton conduction. This is ATP synthase subunit delta from Burkholderia thailandensis (strain ATCC 700388 / DSM 13276 / CCUG 48851 / CIP 106301 / E264).